A 143-amino-acid chain; its full sequence is Transcriptional regulator MraZ (143 aa).

SpoVT-AbrB domains follow at residues 5–47 and 76–119; these read EYHH…SMEE and AMES…AKER.

It belongs to the MraZ family. As to quaternary structure, forms oligomers.

The protein resides in the cytoplasm. Its subcellular location is the nucleoid. This chain is Transcriptional regulator MraZ, found in Lactobacillus helveticus (strain DPC 4571).